The primary structure comprises 237 residues: Uridylate kinase (237 aa).

Lysine 9–glycine 12 serves as a coordination point for ATP. The interval glycine 17–glycine 22 is involved in allosteric activation by GTP. A UMP-binding site is contributed by glycine 51. The ATP site is built by glycine 52 and arginine 56. UMP-binding positions include aspartate 72 and threonine 133–threonine 140. Residues threonine 160, tyrosine 166, and aspartate 169 each coordinate ATP.

Belongs to the UMP kinase family. As to quaternary structure, homohexamer.

It localises to the cytoplasm. The enzyme catalyses UMP + ATP = UDP + ADP. It participates in pyrimidine metabolism; CTP biosynthesis via de novo pathway; UDP from UMP (UMPK route): step 1/1. With respect to regulation, allosterically activated by GTP. Inhibited by UTP. In terms of biological role, catalyzes the reversible phosphorylation of UMP to UDP. This is Uridylate kinase from Sulfurimonas denitrificans (strain ATCC 33889 / DSM 1251) (Thiomicrospira denitrificans (strain ATCC 33889 / DSM 1251)).